The primary structure comprises 470 residues: Dendritic cell-specific transmembrane protein (470 aa).

At 1 to 34 (MGIWTSGTDIFLSLWEIYVSPRSPGWMDFIQHLG) the chain is on the cytoplasmic side. Residues 35–55 (VCCLVALISVGLLSVAACWFL) traverse the membrane as a helical segment. The Extracellular segment spans residues 56 to 57 (PS). Residues 58 to 78 (IIAAAASWIITCVLLCCSKHA) form a helical membrane-spanning segment. The Cytoplasmic segment spans residues 79–97 (RCFILLVFLSCGLREGRNA). Residues 98–118 (LIAAGTGIVILGHVENIFHNF) form a helical membrane-spanning segment. Residues 119-209 (KGLLDGMTCN…MATTTEVLSS (91 aa)) lie on the Extracellular side of the membrane. Residues 210–230 (LGQKLLAFAGLSLVLLGTGLF) traverse the membrane as a helical segment. At 231 to 292 (MKRFLGPCGW…FWPTPKERKN (62 aa)) the chain is on the cytoplasmic side. Residues 293–313 (LGLFFLPILIHLCIWVLFAAV) form a helical membrane-spanning segment. Topologically, residues 314-376 (DYLLYRLIFS…PKPKFLLSET (63 aa)) are extracellular. The helical transmembrane segment at 377–397 (WVPLSVILLILVMLGLLSSIL) threads the bilayer. Residues 398 to 470 (MQLKILVSAS…QMDMASADKS (73 aa)) lie on the Cytoplasmic side of the membrane.

In terms of assembly, monomer. Homodimer. Isoform 1 interacts (via the C-terminus cytoplasmic tail) with OS9 isoform 1 (via the C-terminus tail); the interaction induces DCSTAMP redistribution to the endoplasmic reticulum-Golgi intermediate compartment. Isoform 1 interacts (via the C-terminus cytoplasmic tail) with OS9 isoform 2 (via the C-terminus tail). Interacts with CREB3. In terms of processing, glycosylated. Preferentially expressed by dendritic cells (DCs). Detected in both immature and mature DCs. Highly expressed in lymph nodes, lung, kidney and liver. Expressed at lower levels in pancreas, bone marrow, spleen, leukocytes, in freshly isolated peripheral blood mononuclear cells (PBMC) and B-cells. Not expressed in freshly isolated monocytes.

It localises to the cell membrane. Its subcellular location is the endoplasmic reticulum membrane. The protein localises to the endoplasmic reticulum-Golgi intermediate compartment membrane. It is found in the endosome. Functionally, probable cell surface receptor that plays several roles in cellular fusion, cell differentiation, bone and immune homeostasis. Plays a role in TNFSF11-mediated osteoclastogenesis. Cooperates with OCSTAMP in modulating cell-cell fusion in both osteoclasts and foreign body giant cells (FBGCs). Participates in osteoclast bone resorption. Involved in inducing the expression of tartrate-resistant acid phosphatase in osteoclast precursors. Plays a role in haematopoietic stem cell differentiation of bone marrow cells toward the myeloid lineage. Inhibits the development of neutrophilic granulocytes. Plays also a role in the regulation of dendritic cell (DC) antigen presentation activity by controlling phagocytic activity. Involved in the maintenance of immune self-tolerance and avoidance of autoimmune reactions. The chain is Dendritic cell-specific transmembrane protein (DCSTAMP) from Homo sapiens (Human).